The following is a 541-amino-acid chain: Chlorophyllide a oxygenase, chloroplastic (541 aa).

Positions Leu114–Ser151 form a coiled coil. Polar residues predominate over residues Ala178–Arg192. The segment at Ala178–Pro208 is disordered. The 101-residue stretch at Trp220–Ile320 folds into the Rieske domain. [2Fe-2S] cluster-binding residues include Cys261, His263, Cys280, and His283. Fe cation-binding residues include Asp359, Asp363, His366, and His371.

Expressed in leaves and germinating seedlings, but not in sheaths and roots.

The protein localises to the plastid. It is found in the chloroplast membrane. It localises to the chloroplast thylakoid membrane. It catalyses the reaction chlorophyllide a + 2 NADPH + 2 O2 + 2 H(+) = chlorophyllide b + 2 NADP(+) + 3 H2O. Its function is as follows. Catalyzes a two-step oxygenase reaction involved in the synthesis of chlorophyll b. Acts specifically on the non-esterified chlorophyllide a and not on chlorophyll a. The chain is Chlorophyllide a oxygenase, chloroplastic (CAO) from Oryza sativa subsp. japonica (Rice).